The primary structure comprises 661 residues: Chermesin D/asnovolin J monooxidase nvfH (661 aa).

N-linked (GlcNAc...) asparagine glycosylation is present at N12. The helical transmembrane segment at 89 to 111 (VLIIGAGYGGLLFAVRIIQTGAF) threads the bilayer. Residues 128-131 (TWYW), 140-141 (DV), and Y146 each bind FAD. NADP(+) is bound at residue 138–140 (MCD). Residues 286-292 (TGATAIQ) and 309-310 (RT) each bind NADP(+). N-linked (GlcNAc...) asparagine glycans are attached at residues N382 and N538.

This sequence belongs to the FAD-binding monooxygenase family. FAD is required as a cofactor.

The protein resides in the membrane. The catalysed reaction is chermesin D + AH2 + O2 = asnovolin I + A + H2O. It catalyses the reaction asnovolin J + AH2 + O2 = asnovolin A + A + H2O. The protein operates within secondary metabolite biosynthesis; terpenoid biosynthesis. Functionally, chermesin D/asnovolin J monooxidase; part of the gene cluster that mediates the biosynthesis of novofumigatonin, a heavily oxygenated meroterpenoid containing a unique orthoester moiety. The first step of the pathway is the synthesis of 3,5-dimethylorsellinic acid (DMOA) by the polyketide synthase nvfA via condensation of one acetyl-CoA starter unit with 3 malonyl-CoA units and 2 methylations. DMOA is then converted to farnesyl-DMOA by the farnesyltransferase nvfB. Epoxydation by FAD-dependent monooxygenase nvfK, followed by a protonation-initiated cyclization catalyzed by the terpene cyclase nvfL leads to the production of asnavolin H. The short chain dehydrogenase nvfC then as a 3-OH dehydrogenase of asnovolin H to yield chemesin D. There are two branches to synthesize asnovolin A from chemesin D. In one branch, chemesin D undergoes Baeyer-Villiger oxidation by nvfH, methylation by nvfJ, and enoyl reduction by the nvfM D enoylreductase that reduces the double bond between C-5'and C-6', to form respectively asnovolin I, asnovolin K, and asnovolin A. In the other branch, the methylation precedes the Baeyer-Villiger oxidation and the enoyl reduction to yield asnovolin A via the asnovolin J intermediate. Asnovolin A is further converted to fumigatonoid A by the Fe(II)/2-oxoglutarate-dependent dioxygenase nvfI that catalyzes an endoperoxidation reaction. The alpha/beta hydrolase nvfD then acts as an epimerase that converts fumigatonoid A to its C-5' epimer, which then undergoes spontaneous or nvfD-catalyzed lactonization. The following step utilizes the ketoreductase nvfG to produce fumigatonoid B. The dioxygenase nvfE further converts fumigatonoid B into fumigatonoid C. Finally the Fe(II)/2-oxoglutarate-dependent dioxygenase nvfF catalyzes two rounds of oxidation to transform fumigatonoid C into the end product, novofumigatonin A. The protein is Chermesin D/asnovolin J monooxidase nvfH of Aspergillus novofumigatus (strain IBT 16806).